A 442-amino-acid polypeptide reads, in one-letter code: MATSVSTIGAVNKTPLSLNNSVAGTSVPSTAFFGKTLKKVYGKGVSSPKVTNKSLRIVAEQIDVDPKKQTDSDRWKGLVQDFSDDQQDITRGKGMVDSLFQAPTGTGTHHAVLQSYEYVSQGLRQYNLDNKLDGFYIAPAFMDKLVVHITKNFLKLPNIKVPLILGIWGGKGQGKSFQCELVFRKMGINPIMMSAGELESGNAGEPAKLIRQRYREAAEIIRKGNMCCLFINDLDAGAGRMGGTTQYTVNNQMVNATLMNIADNPTNVQLPGMYNKQENARVPIIVTGNDFSTLYAPLIRDGRMEKFYWAPTREDRIGVCTGIFRTDNVPAEDVVKIVDNFPGQSIDFFGALRARVYDDEVRKWVSGTGIEKIGDKLLNSFDGPPTFEQPKMTIEKLLEYGNMLVQEQENVKRVQLADKYLKEAALGDANADAINNGSFFAS.

The transit peptide at 1–58 (MATSVSTIGAVNKTPLSLNNSVAGTSVPSTAFFGKTLKKVYGKGVSSPKVTNKSLRIV) directs the protein to the chloroplast. 169-176 (GGKGQGKS) serves as a coordination point for ATP.

The protein belongs to the RuBisCO activase family.

The protein localises to the plastid. It is found in the chloroplast stroma. Activation of RuBisCO (ribulose-1,5-bisphosphate carboxylase/oxygenase; EC 4.1.1.39) involves the ATP-dependent carboxylation of the epsilon-amino group of lysine leading to a carbamate structure. This Nicotiana tabacum (Common tobacco) protein is Ribulose bisphosphate carboxylase/oxygenase activase 1, chloroplastic.